The primary structure comprises 162 residues: Eukaryotic translation initiation factor 5 (162 aa).

A disordered region spans residues Pro-59–Glu-162. Polar residues predominate over residues Gly-85–Ser-109. Positions Asp-148–Glu-162 are enriched in basic and acidic residues.

It belongs to the eIF-2-beta/eIF-5 family.

In terms of biological role, catalyzes the hydrolysis of GTP bound to the 40S ribosomal initiation complex (40S.mRNA.Met-tRNA[F].eIF-2.GTP) with the subsequent joining of a 60S ribosomal subunit resulting in the release of eIF-2 and the guanine nucleotide. The subsequent joining of a 60S ribosomal subunit results in the formation of a functional 80S initiation complex (80S.mRNA.Met-tRNA[F]). This is Eukaryotic translation initiation factor 5 from Tribolium castaneum (Red flour beetle).